The following is a 275-amino-acid chain: Putative acyl-[acyl-carrier-protein] desaturase DesA2 (275 aa).

Residues E107, H110, E159, E189, and H192 each coordinate Fe cation.

Belongs to the fatty acid desaturase type 2 family. In terms of assembly, homodimer. It depends on Fe(2+) as a cofactor.

It functions in the pathway lipid metabolism; fatty acid metabolism. In terms of biological role, may be a desaturase involved in mycobacterial fatty acid biosynthesis. In Mycobacterium tuberculosis (strain CDC 1551 / Oshkosh), this protein is Putative acyl-[acyl-carrier-protein] desaturase DesA2 (desA2).